The chain runs to 296 residues: tRNA pseudouridine synthase B (296 aa).

The Nucleophile role is filled by Asp38.

It belongs to the pseudouridine synthase TruB family. Type 1 subfamily.

It carries out the reaction uridine(55) in tRNA = pseudouridine(55) in tRNA. Functionally, responsible for synthesis of pseudouridine from uracil-55 in the psi GC loop of transfer RNAs. This chain is tRNA pseudouridine synthase B, found in Ehrlichia ruminantium (strain Gardel).